Here is a 410-residue protein sequence, read N- to C-terminus: Histone-lysine N-methyltransferase SUV39H2 (410 aa).

One can recognise a Chromo domain in the interval Tyr47–Lys105. The 59-residue stretch at Phe189–Gly247 folds into the Pre-SET domain. Zn(2+) contacts are provided by Cys191, Cys193, Cys196, Cys201, Cys202, Cys229, Cys233, Cys235, and Cys239. In terms of domain architecture, SET spans Tyr250–Gln373. Residues Arg261 to Trp263, Tyr304, and Asn330 to His331 contribute to the S-adenosyl-L-methionine site. Cys333 is a binding site for Zn(2+). Ser381, Ser384, and Ser388 each carry phosphoserine. A Post-SET domain is found at Val394–Asn410. Residues Cys398, Cys400, and Cys405 each coordinate Zn(2+).

This sequence belongs to the class V-like SAM-binding methyltransferase superfamily. Histone-lysine methyltransferase family. Suvar3-9 subfamily. In terms of assembly, interacts with SMAD5. The large PER complex involved in the histone methylation is composed of at least PER2, CBX3, TRIM28, SUV39H1 and/or SUV39H2; CBX3 mediates the formation of the complex. In terms of processing, ubiquitinated by the DCX(DCAF13) E3 ubiquitin ligase complex, leading to its degradation.

It localises to the nucleus. The protein resides in the chromosome. The protein localises to the centromere. It catalyses the reaction L-lysyl(9)-[histone H3] + 3 S-adenosyl-L-methionine = N(6),N(6),N(6)-trimethyl-L-lysyl(9)-[histone H3] + 3 S-adenosyl-L-homocysteine + 3 H(+). Functionally, histone methyltransferase that specifically trimethylates 'Lys-9' of histone H3 using monomethylated H3 'Lys-9' as substrate. H3 'Lys-9' trimethylation represents a specific tag for epigenetic transcriptional repression by recruiting HP1 (CBX1, CBX3 and/or CBX5) proteins to methylated histones. Mainly functions in heterochromatin regions, thereby playing a central role in the establishment of constitutive heterochromatin at pericentric and telomere regions. H3 'Lys-9' trimethylation is also required to direct DNA methylation at pericentric repeats. SUV39H1 is targeted to histone H3 via its interaction with RB1 and is involved in many processes, such as cell cycle regulation, transcriptional repression and regulation of telomere length. May participate in regulation of higher-order chromatin organization during spermatogenesis. Recruited by the large PER complex to the E-box elements of the circadian target genes such as PER2 itself or PER1, contributes to the conversion of local chromatin to a heterochromatin-like repressive state through H3 'Lys-9' trimethylation. The chain is Histone-lysine N-methyltransferase SUV39H2 (SUV39H2) from Macaca fascicularis (Crab-eating macaque).